The sequence spans 477 residues: MATATTLSPADAEKLNNLKSAVAGLNQISENEKSGFINLVGRYLSGEAQHIDWSKIQTPTDEVVVPYDKLAPLSEDPAETKKLLDKLVVLKLNGGLGTTMGCTGPKSVIEVRNGLTFLDLIVKQIEALNAKFGCSVPLLLMNSFNTHDDTLKIVEKYANSNIDIHTFNQSQYPRLVTEDFAPLPCKGNSGKDGWYPPGHGDVFPSLMNSGKLDALLAKGKEYVFVANSDNLGAIVDLKILNHLILNKNEYCMEVTPKTLADVKGGTLISYEGKVQLLEIAQVPDEHVNEFKSIEKFKIFNTNNLWVNLSAIKRLVEADALKMEIIPNPKEVDGVKVLQLETAAGAAIKFFDRAIGANVPRSRFLPVKATSDLLLVQSDLYTLTDEGYVIRNPARSNPSNPSIELGPEFKKVANFLGRFKSIPSIIDLDSLKVTGDVWFGSGVTLKGKVTVAAKSGVKLEIPDGAVIANKDINGPEDI.

At alanine 2 the chain carries N-acetylalanine. UTP-binding positions include 92–95, lysine 106, glutamine 169, and glycine 198; that span reads LNGG. Residue 94-95 participates in substrate binding; that stretch reads GG. Residues histidine 199 and 227-229 contribute to the substrate site; that span reads NSD. Positions 229 and 367 each coordinate UTP.

This sequence belongs to the UDPGP type 1 family. Monomer. Mg(2+) is required as a cofactor.

It localises to the cytoplasm. The catalysed reaction is alpha-D-glucose 1-phosphate + UTP + H(+) = UDP-alpha-D-glucose + diphosphate. With respect to regulation, inhibition by uncomplexed, free UTP. Functionally, plays a central role as a glucosyl donor in cellular metabolic pathways. This is UTP--glucose-1-phosphate uridylyltransferase from Solanum tuberosum (Potato).